We begin with the raw amino-acid sequence, 272 residues long: MTTTLSSNWKKLSSKLNQGSKVTKQPVKGKNGKTKIKKAELENTLNITPTLQKSTLSPIELALWTKENDINVSDIAVQTEKITLIPQGNDIRKKEPGKYLAMDCEFVGVGPEGTESALARVSIVNFYGHTVFDKFVKPRERVTDWRTWVSGVTPKHMNEAISFQEAQNETSKLLEGRILVGHAIHHDLDALFLSHPKSRIRDTSQYKPFRSISMGKTPSLKKLSSHFLKIDIQGSAHSSVEDARATMLLFRLHRKEFEQSIRTQNRKPEKTS.

Over residues 1–17 the composition is skewed to low complexity; that stretch reads MTTTLSSNWKKLSSKLN. The interval 1 to 33 is disordered; it reads MTTTLSSNWKKLSSKLNQGSKVTKQPVKGKNGK. Residues 99 to 250 form the Exonuclease domain; the sequence is YLAMDCEFVG…EDARATMLLF (152 aa).

The protein belongs to the REXO4 family.

The protein resides in the nucleus. Exoribonuclease involved in ribosome biosynthesis. Involved in the processing of ITS1, the internal transcribed spacer localized between the 18S and 5.8S rRNAs. This is RNA exonuclease 4 (REX4) from Debaryomyces hansenii (strain ATCC 36239 / CBS 767 / BCRC 21394 / JCM 1990 / NBRC 0083 / IGC 2968) (Yeast).